The sequence spans 352 residues: uncharacterized protein (352 aa).

The protein to Synechocystis PCC 6803 slr0039.

This is an uncharacterized protein from Archaeoglobus fulgidus (strain ATCC 49558 / DSM 4304 / JCM 9628 / NBRC 100126 / VC-16).